Consider the following 521-residue polypeptide: Cyclic AMP-responsive element-binding protein 3-like protein 2 (521 aa).

The Cytoplasmic portion of the chain corresponds to 1 to 378 (MEVLESGEQS…CKLAGTQTGT (378 aa)). At serine 93 the chain carries Phosphoserine. A Glycyl lysine isopeptide (Lys-Gly) (interchain with G-Cter in SUMO2) cross-link involves residue lysine 178. Serine 191 carries the post-translational modification Phosphoserine. The interval 196–264 (SVDQLHLPPT…PHKLQGSGPL (69 aa)) is disordered. Positions 208 to 220 (SSHSSDSEGSLSP) are enriched in low complexity. Residues 294-357 (ALKKIRRKIK…RTLLQQLQKL (64 aa)) form the bZIP domain. The tract at residues 296–325 (KKIRRKIKNKISAQESRRKKKEYMDSLEKK) is basic motif. The leucine-zipper stretch occupies residues 336-357 (LRKKVEVLENTNRTLLQQLQKL). A helical; Signal-anchor for type II membrane protein transmembrane segment spans residues 379-399 (CLMVVVLCFAVAFGSLFQGYG). Residues 400-521 (LYPSATKMAL…ELERRVNATF (122 aa)) are Lumenal-facing. An S1P recognition motif is present at residues 427 to 430 (RNLL). N-linked (GlcNAc...) asparagine glycosylation is found at asparagine 505 and asparagine 518.

This sequence belongs to the bZIP family. ATF subfamily. Binds DNA as a dimer. Upon ER stress, translocated to the Golgi apparatus, where it is processed by regulated intramembrane proteolysis (RIP) to release the cytosol-facing N-terminal transcription factor domain. The cleavage is performed sequentially by site-1 and site-2 proteases (S1P/MBTPS1 and S2P/MBTPS2). In terms of processing, N-glycosylated. Post-translationally, ubiquitinated by HRD1/SYVN1; undergoes 'Lys-48'-linked ubiquitination, followed by rapid proteasomal degradation under normal conditions. Upon ER stress, SYVN1 E3 ubiquitin-protein ligase dissociates from its substrate, ubiquitination does not occur and CREB3L2 is stabilized.

The protein resides in the endoplasmic reticulum membrane. Its subcellular location is the nucleus. In terms of biological role, transcription factor involved in unfolded protein response (UPR). In the absence of endoplasmic reticulum (ER) stress, inserted into ER membranes, with N-terminal DNA-binding and transcription activation domains oriented toward the cytosolic face of the membrane. In response to ER stress, transported to the Golgi, where it is cleaved in a site-specific manner by resident proteases S1P/MBTPS1 and S2P/MBTPS2. The released N-terminal cytosolic domain is translocated to the nucleus to effect transcription of specific target genes. Plays a critical role in chondrogenesis by activating the transcription of SEC23A, which promotes the transport and secretion of cartilage matrix proteins, and possibly that of ER biogenesis-related genes. In a neuroblastoma cell line, protects cells from ER stress-induced death. In vitro activates transcription of target genes via direct binding to the CRE site. This chain is Cyclic AMP-responsive element-binding protein 3-like protein 2 (Creb3l2), found in Rattus norvegicus (Rat).